The chain runs to 228 residues: Prolactin-2B1 (228 aa).

A signal peptide spans 1 to 31 (MLLYLPQIFSSRASSLLFLVPYLLFWENVAS). 2 disulfides stabilise this stretch: C89/C194 and C203/C228. N173 is a glycosylation site (N-linked (GlcNAc...) asparagine).

The protein belongs to the somatotropin/prolactin family. Expression restricted to the placenta in trophoblast cells within the labyrinth zone.

The protein resides in the secreted. This is Prolactin-2B1 (Prl2b1) from Rattus norvegicus (Rat).